A 504-amino-acid polypeptide reads, in one-letter code: DnaJ homolog subfamily C member 3 (504 aa).

The signal sequence occupies residues 1-31 (MVAPGSVTSRLGSVFPFLLVLVDLQYEGAEC). 9 TPR repeats span residues 37–70 (VEKH…DPDN), 72–104 (IAYY…KMDF), 105–138 (TAAR…NPSE), 154–187 (MQRL…CVWD), 189–221 (ELRE…KNDN), 222–255 (TEAF…DQDH), 268–301 (LNKL…EPGV), 306–339 (IRSK…EPDN), and 340–373 (VNAL…NEND). Cys-248 and Cys-258 form a disulfide bridge. Phosphoserine is present on Ser-274. A disulfide bridge connects residues Cys-313 and Cys-329. The tract at residues 375–393 (QIREGLEKAQRLLKQSQRR) is flexible linker. The region spanning 394–462 (DYYKILGVKR…EMRKKFDDGE (69 aa)) is the J domain. Residues 451–481 (DPEMRKKFDDGEDPLDAESQQGGGGNPFHRS) are disordered.

Interacts with EIF2AK4/GCN2; this interaction occurs under endoplasmic reticulum (ER) stress, hypothermic and amino acid starving stress conditions and inhibits EIF2AK4/GCN2 kinase activity. Interacts with EIF2AK3. Interacts with EIF2AK2. Forms a trimeric complex with DNAJB1 and HSPA8. Interacts with THAP12.

It localises to the endoplasmic reticulum. Functionally, involved in the unfolded protein response (UPR) during endoplasmic reticulum (ER) stress. Acts as a negative regulator of the EIF2AK4/GCN2 kinase activity by preventing the phosphorylation of eIF-2-alpha at 'Ser-52' and hence attenuating general protein synthesis under ER stress, hypothermic and amino acid starving stress conditions. Co-chaperone of HSPA8/HSC70, it stimulates its ATPase activity. May inhibit both the autophosphorylation of EIF2AK2/PKR and the ability of EIF2AK2 to catalyze phosphorylation of the EIF2A. May inhibit EIF2AK3/PERK activity. This chain is DnaJ homolog subfamily C member 3 (DNAJC3), found in Bos taurus (Bovine).